Here is a 245-residue protein sequence, read N- to C-terminus: Orotidine 5'-phosphate decarboxylase (245 aa).

Substrate-binding positions include D22, K44, 71–80 (DLKFHDIPNT), T131, R192, Q201, G221, and R222. Residue K73 is the Proton donor of the active site.

It belongs to the OMP decarboxylase family. Type 1 subfamily. As to quaternary structure, homodimer.

It carries out the reaction orotidine 5'-phosphate + H(+) = UMP + CO2. It functions in the pathway pyrimidine metabolism; UMP biosynthesis via de novo pathway; UMP from orotate: step 2/2. Its function is as follows. Catalyzes the decarboxylation of orotidine 5'-monophosphate (OMP) to uridine 5'-monophosphate (UMP). This chain is Orotidine 5'-phosphate decarboxylase, found in Salmonella gallinarum (strain 287/91 / NCTC 13346).